Here is a 273-residue protein sequence, read N- to C-terminus: Large ribosomal subunit protein uL2 (273 aa).

The segment at 221–263 (RGTAMNPVDHPHGGGEGRNFGKHPVSPWGLQTKGKKTRKNKRT) is disordered. A compositionally biased stretch (basic residues) spans 253 to 263 (KGKKTRKNKRT).

The protein belongs to the universal ribosomal protein uL2 family. Part of the 50S ribosomal subunit. Forms a bridge to the 30S subunit in the 70S ribosome.

Its function is as follows. One of the primary rRNA binding proteins. Required for association of the 30S and 50S subunits to form the 70S ribosome, for tRNA binding and peptide bond formation. It has been suggested to have peptidyltransferase activity; this is somewhat controversial. Makes several contacts with the 16S rRNA in the 70S ribosome. This chain is Large ribosomal subunit protein uL2, found in Buchnera aphidicola subsp. Baizongia pistaciae (strain Bp).